A 739-amino-acid polypeptide reads, in one-letter code: Phosphoribosylformylglycinamidine synthase subunit PurL (739 aa).

The active site involves His-54. 2 residues coordinate ATP: Tyr-57 and Lys-96. Residue Glu-98 participates in Mg(2+) binding. Substrate-binding positions include 99-102 and Arg-121; that span reads SHNH. The active-site Proton acceptor is His-100. Residue Asp-122 participates in Mg(2+) binding. Gln-245 is a binding site for substrate. Asp-273 contributes to the Mg(2+) binding site. 317-319 contacts substrate; sequence ESQ. ATP contacts are provided by Asp-500 and Gly-537. Residue Asn-538 coordinates Mg(2+). Residue Ser-540 participates in substrate binding.

It belongs to the FGAMS family. In terms of assembly, monomer. Part of the FGAM synthase complex composed of 1 PurL, 1 PurQ and 2 PurS subunits.

The protein localises to the cytoplasm. The enzyme catalyses N(2)-formyl-N(1)-(5-phospho-beta-D-ribosyl)glycinamide + L-glutamine + ATP + H2O = 2-formamido-N(1)-(5-O-phospho-beta-D-ribosyl)acetamidine + L-glutamate + ADP + phosphate + H(+). It functions in the pathway purine metabolism; IMP biosynthesis via de novo pathway; 5-amino-1-(5-phospho-D-ribosyl)imidazole from N(2)-formyl-N(1)-(5-phospho-D-ribosyl)glycinamide: step 1/2. Its function is as follows. Part of the phosphoribosylformylglycinamidine synthase complex involved in the purines biosynthetic pathway. Catalyzes the ATP-dependent conversion of formylglycinamide ribonucleotide (FGAR) and glutamine to yield formylglycinamidine ribonucleotide (FGAM) and glutamate. The FGAM synthase complex is composed of three subunits. PurQ produces an ammonia molecule by converting glutamine to glutamate. PurL transfers the ammonia molecule to FGAR to form FGAM in an ATP-dependent manner. PurS interacts with PurQ and PurL and is thought to assist in the transfer of the ammonia molecule from PurQ to PurL. This is Phosphoribosylformylglycinamidine synthase subunit PurL from Bacillus cereus (strain G9842).